A 368-amino-acid polypeptide reads, in one-letter code: tRNA-specific 2-thiouridylase MnmA (368 aa).

ATP is bound by residues 11-18 (GMSGGVDS) and methionine 37. Positions 97 to 99 (NPD) are interaction with target base in tRNA. The Nucleophile role is filled by cysteine 102. A disulfide bond links cysteine 102 and cysteine 199. An ATP-binding site is contributed by glycine 127. The segment at 149 to 151 (KDQ) is interaction with tRNA. Cysteine 199 (cysteine persulfide intermediate) is an active-site residue. Positions 311-312 (RY) are interaction with tRNA.

It belongs to the MnmA/TRMU family. Interacts with TusE.

It is found in the cytoplasm. The enzyme catalyses S-sulfanyl-L-cysteinyl-[protein] + uridine(34) in tRNA + AH2 + ATP = 2-thiouridine(34) in tRNA + L-cysteinyl-[protein] + A + AMP + diphosphate + H(+). Functionally, catalyzes the 2-thiolation of uridine at the wobble position (U34) of tRNA(Lys), tRNA(Glu) and tRNA(Gln), leading to the formation of s(2)U34, the first step of tRNA-mnm(5)s(2)U34 synthesis. Sulfur is provided by IscS, via a sulfur-relay system. Binds ATP and its substrate tRNAs. This chain is tRNA-specific 2-thiouridylase MnmA, found in Citrobacter koseri (strain ATCC BAA-895 / CDC 4225-83 / SGSC4696).